A 1050-amino-acid chain; its full sequence is RecBCD enzyme subunit RecB (1050 aa).

The UvrD-like helicase ATP-binding domain maps to 1 to 443; that stretch reads MKPFNIFDSN…LQLVNNYRST (443 aa). Positions 1–766 are DNA-binding and helicase activity, interacts with RecC; it reads MKPFNIFDSN…TNYVKLEGTQ (766 aa). An ATP-binding site is contributed by 21–28; the sequence is ASAGTGKT. One can recognise a UvrD-like helicase C-terminal domain in the interval 458 to 701; the sequence is SPFLEIPGYL…KITTIHSSKG (244 aa). The nuclease activity, interacts with RecD and RecA stretch occupies residues 814–1050; that stretch reads PKTIFSFSST…KAIQKCQAYH (237 aa). 3 residues coordinate Mg(2+): histidine 859, aspartate 945, and aspartate 958. Residue aspartate 958 is the For nuclease activity of the active site.

It belongs to the helicase family. UvrD subfamily. As to quaternary structure, heterotrimer of RecB, RecC and RecD. All subunits contribute to DNA-binding. Interacts with RecA. Requires Mg(2+) as cofactor.

The enzyme catalyses Exonucleolytic cleavage (in the presence of ATP) in either 5'- to 3'- or 3'- to 5'-direction to yield 5'-phosphooligonucleotides.. It carries out the reaction Couples ATP hydrolysis with the unwinding of duplex DNA by translocating in the 3'-5' direction.. It catalyses the reaction ATP + H2O = ADP + phosphate + H(+). A helicase/nuclease that prepares dsDNA breaks (DSB) for recombinational DNA repair. Binds to DSBs and unwinds DNA via a highly rapid and processive ATP-dependent bidirectional helicase activity. Unwinds dsDNA until it encounters a Chi (crossover hotspot instigator) sequence from the 3' direction. Cuts ssDNA a few nucleotides 3' to the Chi site. The properties and activities of the enzyme are changed at Chi. The Chi-altered holoenzyme produces a long 3'-ssDNA overhang and facilitates RecA-binding to the ssDNA for homologous DNA recombination and repair. Holoenzyme degrades any linearized DNA that is unable to undergo homologous recombination. In the holoenzyme this subunit contributes ATPase, 3'-5' helicase, exonuclease activity and loads RecA onto ssDNA. The protein is RecBCD enzyme subunit RecB of Chlamydia pneumoniae (Chlamydophila pneumoniae).